The chain runs to 600 residues: UvrABC system protein C (600 aa).

The 86-residue stretch at 15–100 (NSAGVYEYFN…IKQLHPKYNI (86 aa)) folds into the GIY-YIG domain. One can recognise a UVR domain in the interval 203-238 (SVLLKNLEKQMLVLAQNENYEEAAKIRDQIATIKDL).

This sequence belongs to the UvrC family. Interacts with UvrB in an incision complex.

The protein resides in the cytoplasm. Functionally, the UvrABC repair system catalyzes the recognition and processing of DNA lesions. UvrC both incises the 5' and 3' sides of the lesion. The N-terminal half is responsible for the 3' incision and the C-terminal half is responsible for the 5' incision. This is UvrABC system protein C from Campylobacter jejuni subsp. doylei (strain ATCC BAA-1458 / RM4099 / 269.97).